A 647-amino-acid chain; its full sequence is Meiotically up-regulated protein C8C9.04 (647 aa).

Disordered regions lie at residues 1 to 241 (MTTN…ELKP) and 387 to 647 (RAQQ…KLFH). The span at 29-46 (KSTNAVEQNNNSSQASVT) shows a compositional bias: polar residues. Residues 49–67 (NKKKAAKRAKKKAAKKKKQ) are compositionally biased toward basic residues. Over residues 92 to 103 (TILQEPGFTQTI) the composition is skewed to polar residues. Residues 134–145 (PSASTSTAVPTT) show a composition bias toward low complexity. Residues 146–155 (EARNTSITEP) show a composition bias toward polar residues. A compositionally biased stretch (low complexity) spans 156 to 177 (ANSPSSSSSSASTKSTATTQSA). Phosphoserine occurs at positions 162 and 165. Thr168 is subject to Phosphothreonine. Over residues 193–215 (QLGNSPASITSKPATTSAAQPSS) the composition is skewed to polar residues. 2 positions are modified to phosphoserine: Ser197 and Ser200. The segment covering 232–241 (AEKEIPELKP) has biased composition (basic and acidic residues). Composition is skewed to polar residues over residues 390-406 (QPEQYESSVVQEATETV), 413-432 (VSSTVKNEVNVPSTIPTESE), and 488-508 (PSSTGQEPTTPSTPAKSAQSS). Ser396 carries the post-translational modification Phosphoserine. Residues Ser489 and Ser490 each carry the phosphoserine modification. Thr491 is modified (phosphothreonine). Residues Ser515, Ser519, and Ser523 each carry the phosphoserine modification. Over residues 518-530 (ASAPSSPGTTSAA) the composition is skewed to low complexity. Residues 561-589 (GSATTIPSPGSATTKPTPGSATTKPTPVS) are compositionally biased toward polar residues. Low complexity predominate over residues 596 to 613 (AGTTKPAPAAGATATAEN). The segment covering 633-647 (SWFKRMKKSFGKLFH) has biased composition (basic residues).

In terms of biological role, has a role in meiosis and sporulation. The chain is Meiotically up-regulated protein C8C9.04 from Schizosaccharomyces pombe (strain 972 / ATCC 24843) (Fission yeast).